The sequence spans 176 residues: Ribosome maturation factor RimM (176 aa).

The region spanning 96 to 176 (PEDEFYWRDL…QILVDWDPDF (81 aa)) is the PRC barrel domain.

This sequence belongs to the RimM family. Binds ribosomal protein uS19.

Its subcellular location is the cytoplasm. Functionally, an accessory protein needed during the final step in the assembly of 30S ribosomal subunit, possibly for assembly of the head region. Essential for efficient processing of 16S rRNA. May be needed both before and after RbfA during the maturation of 16S rRNA. It has affinity for free ribosomal 30S subunits but not for 70S ribosomes. The chain is Ribosome maturation factor RimM from Shewanella woodyi (strain ATCC 51908 / MS32).